The following is a 1164-amino-acid chain: DNA-directed RNA polymerase subunit beta (1164 aa).

The protein belongs to the RNA polymerase beta chain family. In terms of assembly, the RNAP catalytic core consists of 2 alpha, 1 beta, 1 beta' and 1 omega subunit. When a sigma factor is associated with the core the holoenzyme is formed, which can initiate transcription.

It carries out the reaction RNA(n) + a ribonucleoside 5'-triphosphate = RNA(n+1) + diphosphate. DNA-dependent RNA polymerase catalyzes the transcription of DNA into RNA using the four ribonucleoside triphosphates as substrates. This chain is DNA-directed RNA polymerase subunit beta, found in Saccharopolyspora erythraea (strain ATCC 11635 / DSM 40517 / JCM 4748 / NBRC 13426 / NCIMB 8594 / NRRL 2338).